We begin with the raw amino-acid sequence, 498 residues long: ATP synthase subunit beta, chloroplastic (498 aa).

172–179 is a binding site for ATP; the sequence is GGAGVGKT.

Belongs to the ATPase alpha/beta chains family. F-type ATPases have 2 components, CF(1) - the catalytic core - and CF(0) - the membrane proton channel. CF(1) has five subunits: alpha(3), beta(3), gamma(1), delta(1), epsilon(1). CF(0) has four main subunits: a(1), b(1), b'(1) and c(9-12).

It localises to the plastid. It is found in the chloroplast thylakoid membrane. The catalysed reaction is ATP + H2O + 4 H(+)(in) = ADP + phosphate + 5 H(+)(out). Functionally, produces ATP from ADP in the presence of a proton gradient across the membrane. The catalytic sites are hosted primarily by the beta subunits. The sequence is that of ATP synthase subunit beta, chloroplastic from Phormium tenax (New Zealand flax).